The following is a 180-amino-acid chain: Large ribosomal subunit protein uL10 (180 aa).

The protein belongs to the universal ribosomal protein uL10 family. As to quaternary structure, part of the ribosomal stalk of the 50S ribosomal subunit. The N-terminus interacts with L11 and the large rRNA to form the base of the stalk. The C-terminus forms an elongated spine to which L12 dimers bind in a sequential fashion forming a multimeric L10(L12)X complex.

Its function is as follows. Forms part of the ribosomal stalk, playing a central role in the interaction of the ribosome with GTP-bound translation factors. This chain is Large ribosomal subunit protein uL10, found in Thermosipho africanus (strain TCF52B).